The following is an 89-amino-acid chain: Small ribosomal subunit protein uS15 (89 aa).

It belongs to the universal ribosomal protein uS15 family. In terms of assembly, part of the 30S ribosomal subunit. Forms a bridge to the 50S subunit in the 70S ribosome, contacting the 23S rRNA.

Functionally, one of the primary rRNA binding proteins, it binds directly to 16S rRNA where it helps nucleate assembly of the platform of the 30S subunit by binding and bridging several RNA helices of the 16S rRNA. In terms of biological role, forms an intersubunit bridge (bridge B4) with the 23S rRNA of the 50S subunit in the ribosome. This is Small ribosomal subunit protein uS15 from Mycobacterium sp. (strain JLS).